The following is a 28-amino-acid chain: Conotoxin Cl5.3 (28 aa).

This sequence belongs to the conotoxin T superfamily. Contains 2 disulfide bonds that can be either 'C1-C3, C2-C4' or 'C1-C4, C2-C3', since these disulfide connectivities have been observed for conotoxins with cysteine framework V (for examples, see AC P0DQQ7 and AC P81755). In terms of tissue distribution, expressed by the venom duct.

Its subcellular location is the secreted. This is Conotoxin Cl5.3 from Californiconus californicus (California cone).